The primary structure comprises 352 residues: Decapping nuclease din1 (352 aa).

Residues Arg-33 and 93–95 (WRG) each bind substrate. An a divalent metal cation-binding site is contributed by Glu-150. The substrate site is built by Cys-182 and Glu-199. Residue Asp-201 coordinates a divalent metal cation. A Phosphoserine modification is found at Ser-218. A divalent metal cation-binding residues include Glu-239 and Leu-240. Residues Lys-241 and Gln-263 each contribute to the substrate site.

This sequence belongs to the DXO/Dom3Z family. As to quaternary structure, interacts with dhp1/Rat1; the interaction is direct, stabilizes dhp1 protein structure and stimulates its exoribonuclease activity. The interaction also stimulates din1 pyrophosphohydrolase activity, probably by recruiting it to mRNA substrates. A divalent metal cation is required as a cofactor.

Its subcellular location is the nucleus. The catalysed reaction is a 5'-end NAD(+)-phospho-ribonucleoside in mRNA + H2O = a 5'-end phospho-ribonucleoside in mRNA + NAD(+) + H(+). It carries out the reaction a 5'-end (N(7)-methyl 5'-triphosphoguanosine)-ribonucleoside-ribonucleotide in mRNA + H2O = a (N(7)-methyl 5'-triphosphoguanosine)-nucleoside + a 5'-end phospho-ribonucleoside in mRNA + H(+). It catalyses the reaction a 5'-end triphospho-ribonucleoside in mRNA + H2O = a 5'-end phospho-ribonucleoside in mRNA + diphosphate + H(+). Decapping enzyme for NAD-capped RNAs: specifically hydrolyzes the nicotinamide adenine dinucleotide (NAD) cap from a subset of RNAs by removing the entire NAD moiety from the 5'-end of an NAD-capped RNA. The NAD-cap is present at the 5'-end of some RNAs and snoRNAs. In contrast to the canonical 5'-end N7 methylguanosine (m7G) cap, the NAD cap promotes mRNA decay. Also acts as a non-canonical decapping enzyme that removes the entire cap structure of m7G capped or incompletely capped RNAs and mediates their subsequent degradation. Specifically degrades pre-mRNAs with a defective m7G cap and is part of a pre-mRNA capping quality control. Has decapping activity toward incomplete 5'-end m7G cap mRNAs such as unmethylated 5'-end-capped RNA (cap0), while it has no activity toward 2'-O-ribose methylated m7G cap (cap1). Also possesses RNA 5'-pyrophosphohydrolase activity by hydrolyzing the 5'-end triphosphate to release pyrophosphates. Stimulates exoribonuclease activity of dhp1, allowing it to degrade RNAs with stable secondary structure more effectively. The sequence is that of Decapping nuclease din1 from Schizosaccharomyces pombe (strain 972 / ATCC 24843) (Fission yeast).